We begin with the raw amino-acid sequence, 93 residues long: Co-chaperonin GroES (93 aa).

Belongs to the GroES chaperonin family. Heptamer of 7 subunits arranged in a ring. Interacts with the chaperonin GroEL.

The protein localises to the cytoplasm. Its function is as follows. Together with the chaperonin GroEL, plays an essential role in assisting protein folding. The GroEL-GroES system forms a nano-cage that allows encapsulation of the non-native substrate proteins and provides a physical environment optimized to promote and accelerate protein folding. GroES binds to the apical surface of the GroEL ring, thereby capping the opening of the GroEL channel. The polypeptide is Co-chaperonin GroES (Streptococcus constellatus).